A 129-amino-acid chain; its full sequence is Ergosterol biosynthetic protein 28 (129 aa).

Transmembrane regions (helical) follow at residues 4 to 24 (LGYWLMVVGSLRLASVWFGFF), 46 to 66 (TFGVWTLLTCTLCFLCAFNLE), 71 to 91 (YLATFLSFIYALGHFLTEYLF), and 96 to 116 (TIANLSTVGFFAGTSIVWMLL).

Belongs to the ERG28 family.

The protein resides in the endoplasmic reticulum membrane. The protein is Ergosterol biosynthetic protein 28 of Arabidopsis thaliana (Mouse-ear cress).